Here is a 51-residue protein sequence, read N- to C-terminus: Large ribosomal subunit protein eL39-like (51 aa).

This sequence belongs to the eukaryotic ribosomal protein eL39 family. Component of a male germ cell-specific 60S large ribosomal subunit (LSU), which contains RPL10L and RPL39L, instead of RPL10 and RPL39 paralogs. The composition of the rest of the complex is similar to classical ribosomes. As to expression, highly expressed in spermatocytes and spermatids. Highly expressed in embryonic stem cells.

The protein resides in the cytoplasm. In terms of biological role, male germ cell-specific component of the ribosome, which is required for the formation of sperm and male fertility. Replaces the RPL39 paralog in the ribosome of male germ cells. The ribosome is a large ribonucleoprotein complex responsible for the synthesis of proteins in the cell. The male germ cell-specific ribosome displays a ribosomal polypeptide exit tunnel of distinct size and charge states compared with the classical ribosome. It is responsible for regulating the biosynthesis and folding of a subset of male germ-cell-specific proteins that are essential for the formation of sperm. The polypeptide is Large ribosomal subunit protein eL39-like (Mus musculus (Mouse)).